Consider the following 305-residue polypeptide: Putative UDP-glucose 4-epimerase (305 aa).

Residues 10–11 (FI), 30–35 (DNLTTG), 50–51 (DI), and 71–75 (QAAQI) each bind NAD(+). Residues Ser115 and Tyr140 each coordinate substrate. Residues Tyr140 and Lys144 each contribute to the NAD(+) site. The active-site Proton acceptor is Tyr140. Substrate-binding positions include Asn169, 183-184 (VI), 198-200 (IIF), Arg207, and 263-266 (REGE).

Belongs to the NAD(P)-dependent epimerase/dehydratase family. It depends on NAD(+) as a cofactor.

The enzyme catalyses UDP-alpha-D-glucose = UDP-alpha-D-galactose. The protein operates within carbohydrate metabolism; galactose metabolism. Involved in the metabolism of galactose. Catalyzes the conversion of UDP-galactose (UDP-Gal) to UDP-glucose (UDP-Glc) through a mechanism involving the transient reduction of NAD. The chain is Putative UDP-glucose 4-epimerase from Methanocaldococcus jannaschii (strain ATCC 43067 / DSM 2661 / JAL-1 / JCM 10045 / NBRC 100440) (Methanococcus jannaschii).